Here is a 74-residue protein sequence, read N- to C-terminus: Antimicrobial peptide 2 (74 aa).

The N-terminal stretch at 1-22 is a signal peptide; that stretch reads MEIKYLLTVFLVLLIVSDHCQA. At lysine 40 the chain carries Lysine amide. A propeptide spanning residues 46–74 is cleaved from the precursor; it reads DLDGQIDRSRNFRKRDAELEELLSKLPIY.

Expressed by the venom gland.

It localises to the secreted. The protein localises to the target cell membrane. Has antibacterial activity against the Gram-positive bacteria S.aureus (MIC=48 uM), the Gram-negative bacteria E.coli (MIC=120 uM), and the yeast C.albicans (MIC=64 uM). Causes hemolysis on horse erythrocytes. This chain is Antimicrobial peptide 2, found in Androctonus amoreuxi (African fattail scorpion).